A 385-amino-acid chain; its full sequence is GTPase Obg (385 aa).

One can recognise an Obg domain in the interval 1–159; it reads MKFVDEATIL…REIQLELMLL (159 aa). Positions 160–333 constitute an OBG-type G domain; it reads ADVGMLGLPN…LCWDVMAFIN (174 aa). Residues 166-173, 191-195, 213-216, 283-286, and 314-316 each bind GTP; these read GLPNAGKS, FTTLV, DIPG, NKAD, and SAA. Positions 173 and 193 each coordinate Mg(2+). The span at 362–379 shows a compositional bias: acidic residues; it reads QQEEAEETLDDDWDEDGV. The disordered stretch occupies residues 362 to 385; the sequence is QQEEAEETLDDDWDEDGVETIYQR.

The protein belongs to the TRAFAC class OBG-HflX-like GTPase superfamily. OBG GTPase family. In terms of assembly, monomer. Mg(2+) is required as a cofactor.

The protein localises to the cytoplasm. An essential GTPase which binds GTP, GDP and possibly (p)ppGpp with moderate affinity, with high nucleotide exchange rates and a fairly low GTP hydrolysis rate. Plays a role in control of the cell cycle, stress response, ribosome biogenesis and in those bacteria that undergo differentiation, in morphogenesis control. This Sodalis glossinidius (strain morsitans) protein is GTPase Obg.